The sequence spans 325 residues: Lipoyl synthase (325 aa).

7 residues coordinate [4Fe-4S] cluster: Cys-72, Cys-77, Cys-83, Cys-98, Cys-102, Cys-105, and Ser-312. Residues 84 to 301 form the Radical SAM core domain; it reads FSSGTATFMI…AEEGMKMGFK (218 aa).

The protein belongs to the radical SAM superfamily. Lipoyl synthase family. [4Fe-4S] cluster is required as a cofactor.

The protein resides in the cytoplasm. The catalysed reaction is [[Fe-S] cluster scaffold protein carrying a second [4Fe-4S](2+) cluster] + N(6)-octanoyl-L-lysyl-[protein] + 2 oxidized [2Fe-2S]-[ferredoxin] + 2 S-adenosyl-L-methionine + 4 H(+) = [[Fe-S] cluster scaffold protein] + N(6)-[(R)-dihydrolipoyl]-L-lysyl-[protein] + 4 Fe(3+) + 2 hydrogen sulfide + 2 5'-deoxyadenosine + 2 L-methionine + 2 reduced [2Fe-2S]-[ferredoxin]. It participates in protein modification; protein lipoylation via endogenous pathway; protein N(6)-(lipoyl)lysine from octanoyl-[acyl-carrier-protein]: step 2/2. Its function is as follows. Catalyzes the radical-mediated insertion of two sulfur atoms into the C-6 and C-8 positions of the octanoyl moiety bound to the lipoyl domains of lipoate-dependent enzymes, thereby converting the octanoylated domains into lipoylated derivatives. This is Lipoyl synthase from Stutzerimonas stutzeri (strain A1501) (Pseudomonas stutzeri).